Here is a 232-residue protein sequence, read N- to C-terminus: Large ribosomal subunit protein uL1 (232 aa).

It belongs to the universal ribosomal protein uL1 family. As to quaternary structure, part of the 50S ribosomal subunit.

Binds directly to 23S rRNA. The L1 stalk is quite mobile in the ribosome, and is involved in E site tRNA release. Functionally, protein L1 is also a translational repressor protein, it controls the translation of the L11 operon by binding to its mRNA. The polypeptide is Large ribosomal subunit protein uL1 (Variovorax paradoxus (strain S110)).